Reading from the N-terminus, the 299-residue chain is Lysine exporter LysO (299 aa).

A run of 8 helical transmembrane segments spans residues 1–21, 31–51, 58–78, 109–129, 131–151, 169–189, 207–227, and 277–297; these read MFSG…IPLR, QLLS…LAFL, LLAI…CNIA, LKLC…LAFL, HATE…GIQL, IVAV…AFIL, SLSG…AAFF, and PAAI…IAFF.

This sequence belongs to the LysO family.

It is found in the cell inner membrane. Its function is as follows. Mediates export of lysine. The polypeptide is Lysine exporter LysO (Escherichia coli (strain K12)).